We begin with the raw amino-acid sequence, 776 residues long: Mitochondrial intermediate peptidase (776 aa).

The N-terminal 28 residues, 1–28, are a transit peptide targeting the mitochondrion; that stretch reads MRRFSTLSRRLQRVVPASSASTANTSPS. His561 contributes to the Zn(2+) binding site. Glu562 is a catalytic residue. Residues His565 and His568 each coordinate Zn(2+).

Belongs to the peptidase M3 family. Requires Zn(2+) as cofactor.

It is found in the mitochondrion matrix. It carries out the reaction Release of an N-terminal octapeptide as second stage of processing of some proteins imported into the mitochondrion.. Its function is as follows. Cleaves proteins, imported into the mitochondrion, to their mature size. While most mitochondrial precursor proteins are processed to the mature form in one step by mitochondrial processing peptidase (MPP), the sequential cleavage by MIP of an octapeptide after initial processing by MPP is a required step for a subgroup of nuclear-encoded precursor proteins destined for the matrix or the inner membrane. In Yarrowia lipolytica (strain CLIB 122 / E 150) (Yeast), this protein is Mitochondrial intermediate peptidase (OCT1).